The sequence spans 1550 residues: Protein TIME FOR COFFEE (1550 aa).

Disordered regions lie at residues 1 to 191 (MDRN…PVSP), 207 to 304 (VPRK…PVAV), 325 to 505 (TSKQ…SERG), 708 to 736 (QGSVLGRSSNPVQDKNSQSTSKSSETAQR), 779 to 805 (RPPNSGITSSGPTATSTSMNGSASATP), 859 to 1023 (FNGS…KAGV), 1086 to 1130 (ASLE…QSIA), 1163 to 1196 (ALPQSSGSLPTSHHQQLLQQQQQQHMQRSQSQQP), 1213 to 1296 (AASA…SVAA), and 1321 to 1435 (NSKP…PKHG). Positions 43 to 80 (EAARLRDRGGSNKKDRDRERDRDRERERERDRERDRLN) are enriched in basic and acidic residues. The span at 100–118 (DGGDDSSEESVNDDEEYDD) shows a compositional bias: acidic residues. Over residues 134–151 (SNNISAASFSSSLSNHHN) the composition is skewed to low complexity. Residues 157–171 (LHHHHHSHNNNHQRK) are compositionally biased toward basic residues. Residues 241–250 (RQISSTSPAN) show a composition bias toward polar residues. The span at 292-301 (KSSSSKLSSP) shows a compositional bias: low complexity. Residues 348–366 (RVSSPISNPQTLPQSSITL) show a composition bias toward polar residues. A compositionally biased stretch (low complexity) spans 367–379 (AANSSSSNVSAIA). Residues 409–432 (SKSQVPFSNQLKSSGSGEGNSSVL) show a composition bias toward polar residues. Composition is skewed to basic and acidic residues over residues 447–461 (DSEKKENNLSKDETI) and 473–490 (SDGEGAKSSSPEKEKFEI). Polar residues-rich tracts occupy residues 713 to 736 (GRSSNPVQDKNSQSTSKSSETAQR), 783 to 803 (SGITSSGPTATSTSMNGSASA), and 884 to 992 (LTGQ…NLGL). The segment covering 1112–1126 (SGGGAIGKTSGGNGG) has biased composition (gly residues). Polar residues predominate over residues 1164-1173 (LPQSSGSLPT). Positions 1174-1195 (SHHQQLLQQQQQQHMQRSQSQQ) are enriched in low complexity. Polar residues predominate over residues 1234–1253 (NMTTSPAGTTKFANANSGFP). Residues 1254–1273 (QNLVQSSSNQVQSQQWKNNS) are compositionally biased toward low complexity. Composition is skewed to polar residues over residues 1274-1296 (PRTTNTTQAQSPSMLSPSTSVAA), 1321-1342 (NSKPMTSGSPMQQVQGGTNHQA), and 1351-1360 (SPSTSSVSKN). Positions 1361–1382 (ASGSPRTTASASSAANKGGQAS) are enriched in low complexity. Composition is skewed to polar residues over residues 1383–1397 (TTTHSASQPSKNLQP) and 1405–1419 (GGRNNGPSVLGNPTT). Residues 1420–1435 (SSGSKSQQQQQLPKHG) show a composition bias toward low complexity.

In terms of assembly, interacts with MYC2.

It is found in the nucleus. Regulator of normal clock function. Acts in the mid to late night. Contributes to the amplitude of circadian clocks. May act on the transcriptional induction of LATE ELONGATED HYPOCOTYL (LHY). Inhibits MYC2 protein accumulation, acting as a negative factor in the JA-signaling pathway. The chain is Protein TIME FOR COFFEE (TIC) from Arabidopsis thaliana (Mouse-ear cress).